Here is a 317-residue protein sequence, read N- to C-terminus: Retinol dehydrogenase 7 (317 aa).

33–57 provides a ligand contact to NADP(+); it reads FITGCDSGFGNLLARQLDRRGMRVL. Substrate is bound at residue serine 164. Catalysis depends on tyrosine 176, which acts as the Proton acceptor.

Belongs to the short-chain dehydrogenases/reductases (SDR) family.

It is found in the microsome. It localises to the endoplasmic reticulum. The catalysed reaction is all-trans-retinol--[retinol-binding protein] + NAD(+) = all-trans-retinal--[retinol-binding protein] + NADH + H(+). The protein operates within cofactor metabolism; retinol metabolism. Its function is as follows. Acts on retinol bound on cellular retinol-binding protein (CRBP). This Rattus norvegicus (Rat) protein is Retinol dehydrogenase 7.